The chain runs to 118 residues: UPF0344 protein YisL (118 aa).

4 helical membrane-spanning segments follow: residues Leu-4–Ser-24, Ile-33–Phe-53, Glu-62–Ile-82, and Leu-93–Ile-113.

Belongs to the UPF0344 family.

The protein resides in the cell membrane. The sequence is that of UPF0344 protein YisL (yisL) from Bacillus subtilis (strain 168).